The sequence spans 112 residues: Mitochondrial import inner membrane translocase subunit TIM14-3 (112 aa).

A2 is modified (N-acetylalanine). The helical transmembrane segment at 6–28 (IAGAAVAAAAVAGRYGILAWQAF) threads the bilayer. A J domain is found at 53 to 112 (EAALILGVRESVVADKVKEAHRRVMVANHPDAGGSHYLASKINEAKDMMLGKSNNSGSAF).

Belongs to the TIM14 family. As to quaternary structure, probable component of the PAM complex at least composed of a mitochondrial HSP70 protein, TIMM44 and TIMM14. The complex interacts with the TIMM23 component of the TIM17:23 complex.

The protein resides in the mitochondrion. Its subcellular location is the mitochondrion inner membrane. Its function is as follows. Component of the PAM complex, a complex required for the translocation of transit peptide-containing proteins from the inner membrane into the mitochondrial matrix in an ATP-dependent manner. This Arabidopsis thaliana (Mouse-ear cress) protein is Mitochondrial import inner membrane translocase subunit TIM14-3 (TIM14-3).